The sequence spans 156 residues: Small ribosomal subunit protein uS7 (156 aa).

This sequence belongs to the universal ribosomal protein uS7 family. As to quaternary structure, part of the 30S ribosomal subunit. Contacts proteins S9 and S11.

In terms of biological role, one of the primary rRNA binding proteins, it binds directly to 16S rRNA where it nucleates assembly of the head domain of the 30S subunit. Is located at the subunit interface close to the decoding center, probably blocks exit of the E-site tRNA. The sequence is that of Small ribosomal subunit protein uS7 from Geotalea uraniireducens (strain Rf4) (Geobacter uraniireducens).